An 810-amino-acid polypeptide reads, in one-letter code: Actin-regulating kinase PRK1 (810 aa).

Residues Ala22–Leu298 form the Protein kinase domain. Residues Leu28 to Val36 and Lys56 contribute to the ATP site. Asp158 functions as the Proton acceptor in the catalytic mechanism. Ser402, Ser428, and Ser484 each carry phosphoserine. Disordered regions lie at residues Phe552–Ile668 and Gly733–Thr761. Thr553 carries the phosphothreonine modification. A compositionally biased stretch (polar residues) spans Thr553–Asp566. Phosphoserine is present on Ser556. Over residues Asn567–Ser588 the composition is skewed to low complexity. Composition is skewed to basic and acidic residues over residues Ser594 to Arg612 and Phe622 to Arg639. The segment covering Lys645–Thr658 has biased composition (low complexity). A compositionally biased stretch (basic and acidic residues) spans Gly733–Arg748. An interaction with SH3 domain of ABP1 region spans residues Gly743–Pro756.

Belongs to the protein kinase superfamily. Ser/Thr protein kinase family. In terms of assembly, interacts with ABP1, which is required for proper actin patch localization.

It localises to the cytoplasm. The protein localises to the cytoskeleton. It is found in the actin patch. The catalysed reaction is L-seryl-[protein] + ATP = O-phospho-L-seryl-[protein] + ADP + H(+). It carries out the reaction L-threonyl-[protein] + ATP = O-phospho-L-threonyl-[protein] + ADP + H(+). Its function is as follows. Protein kinase involved in the regulation of actin cytoskeleton organization and endocytosis. Phosphorylates PAN1 which disrupts the interaction between PAN1 and END3, and between PAN1 and SLA1. Phosphorylates SCD5. Preferentially, phosphorylates substrates on threonine residues in a [L/I/V/M]-x-x-[Q/N/T/S]-x-T-G motif. The chain is Actin-regulating kinase PRK1 (PRK1) from Saccharomyces cerevisiae (strain ATCC 204508 / S288c) (Baker's yeast).